The chain runs to 310 residues: Glutaminase 1 (310 aa).

Residues serine 66, asparagine 117, glutamate 161, asparagine 168, tyrosine 192, tyrosine 244, and valine 262 each coordinate substrate. Residue lysine 294 is modified to N6-acetyllysine.

The protein belongs to the glutaminase family. As to quaternary structure, homotetramer.

The enzyme catalyses L-glutamine + H2O = L-glutamate + NH4(+). The protein is Glutaminase 1 of Escherichia coli (strain K12).